The primary structure comprises 1828 residues: Separin (1828 aa).

The Peptidase C50 domain occupies 1647-1741 (KEAGSYILNP…SGALYECGSF (95 aa)). Cys1730 is a catalytic residue.

As to quaternary structure, interacts with cut2. Interacts with rad21.

It localises to the cytoplasm. The protein resides in the nucleus. It catalyses the reaction All bonds known to be hydrolyzed by this endopeptidase have arginine in P1 and an acidic residue in P4. P6 is often occupied by an acidic residue or by a hydroxy-amino-acid residue, the phosphorylation of which enhances cleavage.. With respect to regulation, it is inactivated via its interaction with cut2, which probably covers its active site. Cut2 degradation at anaphase, liberates it and triggers rad21 cleavage. Caspase-like protease, which plays a central role in the chromosome segregation by cleaving the rad21 subunit of the cohesin complex at the onset of anaphase. During most of the cell cycle, it is inactivated by securin/cut2 protein. It is also required for pointed nuclear formation. The polypeptide is Separin (cut1) (Schizosaccharomyces pombe (strain 972 / ATCC 24843) (Fission yeast)).